The primary structure comprises 1387 residues: Collagen-like protein 6 (1387 aa).

An N-linked (GlcNAc...) asparagine; by host glycan is attached at asparagine 6. Collagen-like domains lie at 95-154 (GNNG…KGDI), 161-220 (GDKG…KGDN), 266-325 (GEKG…KGEM), 344-403 (GSKG…KGEK), 450-508 (IKGD…KGDI), and 512-751 (GEKG…SGSS). Disordered regions lie at residues 98 to 219 (GNNG…DKGD), 268 to 422 (KGEI…QNQG), and 454 to 753 (KGEK…SSCQ). 8 stretches are compositionally biased toward basic and acidic residues: residues 114–181 (IKGD…KGSK), 189–199 (SKGDNGDKGSK), 207–219 (SKGDKGNKGDKGD), 268–340 (KGEI…DGIK), 364–382 (KGDRGDKGDKGSKGDKGDN), 390–405 (SKGDKGDNGIKGEKGE), 454–535 (KGEK…KGDI), and 544–747 (KGEK…DKGE). Residues asparagine 794, asparagine 814, asparagine 819, asparagine 826, asparagine 846, asparagine 886, asparagine 894, asparagine 969, asparagine 1032, asparagine 1077, asparagine 1123, asparagine 1200, asparagine 1224, asparagine 1232, and asparagine 1233 are each glycosylated (N-linked (GlcNAc...) asparagine; by host).

In terms of processing, may be hydroxylated on lysine by the viral-encoded procollagen-lysine,2-oxoglutarate 5-dioxygenase.

It is found in the virion. Its function is as follows. May participate in the formation of a layer of cross-linked glycosylated fibrils at the viral surface thus giving it a hairy-like appearance. The chain is Collagen-like protein 6 from Acanthamoeba polyphaga mimivirus (APMV).